We begin with the raw amino-acid sequence, 347 residues long: Phosphoribosylformylglycinamidine cyclo-ligase (347 aa).

It belongs to the AIR synthase family.

The protein resides in the cytoplasm. The catalysed reaction is 2-formamido-N(1)-(5-O-phospho-beta-D-ribosyl)acetamidine + ATP = 5-amino-1-(5-phospho-beta-D-ribosyl)imidazole + ADP + phosphate + H(+). Its pathway is purine metabolism; IMP biosynthesis via de novo pathway; 5-amino-1-(5-phospho-D-ribosyl)imidazole from N(2)-formyl-N(1)-(5-phospho-D-ribosyl)glycinamide: step 2/2. This Prochlorococcus marinus (strain MIT 9301) protein is Phosphoribosylformylglycinamidine cyclo-ligase.